Consider the following 174-residue polypeptide: ATP-dependent protease subunit HslV (174 aa).

The active site involves threonine 2. Positions 157, 160, and 163 each coordinate Na(+).

This sequence belongs to the peptidase T1B family. HslV subfamily. As to quaternary structure, a double ring-shaped homohexamer of HslV is capped on each side by a ring-shaped HslU homohexamer. The assembly of the HslU/HslV complex is dependent on binding of ATP.

The protein resides in the cytoplasm. The enzyme catalyses ATP-dependent cleavage of peptide bonds with broad specificity.. With respect to regulation, allosterically activated by HslU binding. Functionally, protease subunit of a proteasome-like degradation complex believed to be a general protein degrading machinery. This chain is ATP-dependent protease subunit HslV, found in Shewanella denitrificans (strain OS217 / ATCC BAA-1090 / DSM 15013).